Reading from the N-terminus, the 301-residue chain is Pyridoxal 5'-phosphate synthase subunit PdxS (301 aa).

D31 serves as a coordination point for D-ribose 5-phosphate. Residue K88 is the Schiff-base intermediate with D-ribose 5-phosphate of the active site. G160 is a binding site for D-ribose 5-phosphate. A D-glyceraldehyde 3-phosphate-binding site is contributed by K172. Residues G221 and 242-243 (GS) contribute to the D-ribose 5-phosphate site.

The protein belongs to the PdxS/SNZ family. In terms of assembly, in the presence of PdxT, forms a dodecamer of heterodimers.

It catalyses the reaction aldehydo-D-ribose 5-phosphate + D-glyceraldehyde 3-phosphate + L-glutamine = pyridoxal 5'-phosphate + L-glutamate + phosphate + 3 H2O + H(+). The protein operates within cofactor biosynthesis; pyridoxal 5'-phosphate biosynthesis. Functionally, catalyzes the formation of pyridoxal 5'-phosphate from ribose 5-phosphate (RBP), glyceraldehyde 3-phosphate (G3P) and ammonia. The ammonia is provided by the PdxT subunit. Can also use ribulose 5-phosphate and dihydroxyacetone phosphate as substrates, resulting from enzyme-catalyzed isomerization of RBP and G3P, respectively. This chain is Pyridoxal 5'-phosphate synthase subunit PdxS, found in Methanosarcina acetivorans (strain ATCC 35395 / DSM 2834 / JCM 12185 / C2A).